A 429-amino-acid polypeptide reads, in one-letter code: Glutamate-1-semialdehyde 2,1-aminomutase (429 aa).

The residue at position 267 (Lys-267) is an N6-(pyridoxal phosphate)lysine.

Belongs to the class-III pyridoxal-phosphate-dependent aminotransferase family. HemL subfamily. Homodimer. Pyridoxal 5'-phosphate is required as a cofactor.

It localises to the cytoplasm. It catalyses the reaction (S)-4-amino-5-oxopentanoate = 5-aminolevulinate. The protein operates within porphyrin-containing compound metabolism; protoporphyrin-IX biosynthesis; 5-aminolevulinate from L-glutamyl-tRNA(Glu): step 2/2. In Xanthomonas campestris pv. campestris (strain 8004), this protein is Glutamate-1-semialdehyde 2,1-aminomutase.